The chain runs to 399 residues: MKIGTPLSPSALRVMLLGAGELGKEVIIALQRLGVEVIAVDRYENAPGHQVAHRAHVISMTDGAALRQLVEQEKPHLIVPEIEAIATDMLVEIEAAGLAEVIPTARAAKLTMNREGIRRLAAEELGLPTSPYKFADSLAELQAAIDGGIGYPCIVKPTMSSSGKGQSLLRGPDDVQKAWDYAASGGRVNQGRVIVEGFIDFDYEITLLTVRARDTAGEVVTHFCEPIGHVQVGGDYVESWQPQAMSPAALQRAQEIAAAVTGNLGGRGLFGVELFVKGDMVWFSEVSPRPHDTGLVTLCSQRFSEFELHARAILGLPVDTALREAGASAVIYGGMEEKGIAFAGLEEALAVPRSDLRLFGKPESFKKRRMGVAVANGESTDQARERAKLAASKVRPTRT.

N(1)-(5-phospho-beta-D-ribosyl)glycinamide contacts are provided by residues 21–22 (EL) and Glu-81. ATP contacts are provided by residues Arg-114, Lys-156, 161-166 (SSGKGQ), 196-199 (EGFI), and Glu-204. The 196-residue stretch at 119–314 (RLAAEELGLP…EFELHARAIL (196 aa)) folds into the ATP-grasp domain. Mg(2+) contacts are provided by Glu-273 and Glu-285. Residues Asp-292, Lys-361, and 368–369 (RR) each bind N(1)-(5-phospho-beta-D-ribosyl)glycinamide. Residues 370 to 399 (MGVAVANGESTDQARERAKLAASKVRPTRT) form a disordered region.

It belongs to the PurK/PurT family. In terms of assembly, homodimer.

It catalyses the reaction N(1)-(5-phospho-beta-D-ribosyl)glycinamide + formate + ATP = N(2)-formyl-N(1)-(5-phospho-beta-D-ribosyl)glycinamide + ADP + phosphate + H(+). It participates in purine metabolism; IMP biosynthesis via de novo pathway; N(2)-formyl-N(1)-(5-phospho-D-ribosyl)glycinamide from N(1)-(5-phospho-D-ribosyl)glycinamide (formate route): step 1/1. In terms of biological role, involved in the de novo purine biosynthesis. Catalyzes the transfer of formate to 5-phospho-ribosyl-glycinamide (GAR), producing 5-phospho-ribosyl-N-formylglycinamide (FGAR). Formate is provided by PurU via hydrolysis of 10-formyl-tetrahydrofolate. This Dechloromonas aromatica (strain RCB) protein is Formate-dependent phosphoribosylglycinamide formyltransferase.